Here is a 121-residue protein sequence, read N- to C-terminus: Cu-Zn superoxide dismutase-like protein (121 aa).

An intrachain disulfide couples Cys-48 to Cys-98.

The protein belongs to the Cu-Zn superoxide dismutase family.

The protein localises to the host cytoplasm. In terms of biological role, virion protein with no enzymatic activity. The sequence is that of Cu-Zn superoxide dismutase-like protein from Vaccinia virus (strain Ankara) (VACV).